The chain runs to 520 residues: Probable methylmalonate-semialdehyde/malonate-semialdehyde dehydrogenase [acylating], mitochondrial (520 aa).

Residues alanine 169, phenylalanine 171, lysine 195, glutamate 198, arginine 199, and serine 248 each contribute to the NAD(+) site. The active-site Nucleophile is cysteine 303. Glutamate 403 provides a ligand contact to NAD(+).

This sequence belongs to the aldehyde dehydrogenase family. As to quaternary structure, homotetramer.

The protein resides in the mitochondrion. It catalyses the reaction 2-methyl-3-oxopropanoate + NAD(+) + CoA + H2O = propanoyl-CoA + hydrogencarbonate + NADH + H(+). The enzyme catalyses 3-oxopropanoate + NAD(+) + CoA + H2O = hydrogencarbonate + acetyl-CoA + NADH + H(+). Functionally, probable malonate and methylmalonate semialdehyde dehydrogenase involved in the catabolism of valine, thymine, and compounds catabolized by way of beta-alanine, including uracil and cytidine. The sequence is that of Probable methylmalonate-semialdehyde/malonate-semialdehyde dehydrogenase [acylating], mitochondrial from Drosophila melanogaster (Fruit fly).